We begin with the raw amino-acid sequence, 458 residues long: Argininosuccinate lyase (458 aa).

It belongs to the lyase 1 family. Argininosuccinate lyase subfamily.

It localises to the cytoplasm. The catalysed reaction is 2-(N(omega)-L-arginino)succinate = fumarate + L-arginine. It functions in the pathway amino-acid biosynthesis; L-arginine biosynthesis; L-arginine from L-ornithine and carbamoyl phosphate: step 3/3. This chain is Argininosuccinate lyase, found in Acetivibrio thermocellus (strain ATCC 27405 / DSM 1237 / JCM 9322 / NBRC 103400 / NCIMB 10682 / NRRL B-4536 / VPI 7372) (Clostridium thermocellum).